Reading from the N-terminus, the 124-residue chain is Large ribosomal subunit protein bL20 (124 aa).

The protein belongs to the bacterial ribosomal protein bL20 family.

Binds directly to 23S ribosomal RNA and is necessary for the in vitro assembly process of the 50S ribosomal subunit. It is not involved in the protein synthesizing functions of that subunit. The polypeptide is Large ribosomal subunit protein bL20 (Gemmatimonas aurantiaca (strain DSM 14586 / JCM 11422 / NBRC 100505 / T-27)).